The sequence spans 498 residues: WD repeat-containing protein 55 homolog (498 aa).

Positions 1–133 (MHTHNNFKTP…TFDLDEDDET (133 aa)) are disordered. Composition is skewed to acidic residues over residues 12-23 (DEDELDDLDEDM), 31-48 (IEQE…EYDL), and 83-95 (SDSD…DAGD). Polar residues predominate over residues 114-123 (PSGSNRQSEA). WD repeat units lie at residues 155 to 194 (KLED…NKLL), 199 to 238 (VHSK…LKKL), 242 to 280 (AHDD…AIFE), 283 to 322 (ELED…MYVQ), 325 to 364 (PYEE…YHCD), and 409 to 448 (QHNM…DFGD).

Belongs to the WD repeat WDR55 family.

This is WD repeat-containing protein 55 homolog from Drosophila erecta (Fruit fly).